Reading from the N-terminus, the 284-residue chain is MFNASDRVQVLSEALPYIQSFAGRTVVVKYGGAAMKDSTLKATVIRDVVFMACVGLRPVLVHGGGPEINLWLEKLGIEPQFMKGLRVTDAPTMDVVEMVLVGRVNKELVSLINQAGGSAVGVCGKDGKLLTARPQGESGIGFVGEVASVNPQLIHNLLDGGHIPIVSSVATDEEGQVYNINADTVAGELAAALDAEKLILLTDTPGILQDYKDATSLIHKLDIRQARELIAAEVVAGGMIPKVTCCIRSLAQGIQAAHIIDGRAPHALLLEIFTDSGIGTMITA.

Substrate-binding positions include 64 to 65 (GG), Arg-86, and Asn-179.

It belongs to the acetylglutamate kinase family. ArgB subfamily.

Its subcellular location is the cytoplasm. The catalysed reaction is N-acetyl-L-glutamate + ATP = N-acetyl-L-glutamyl 5-phosphate + ADP. It participates in amino-acid biosynthesis; L-arginine biosynthesis; N(2)-acetyl-L-ornithine from L-glutamate: step 2/4. In terms of biological role, catalyzes the ATP-dependent phosphorylation of N-acetyl-L-glutamate. This is Acetylglutamate kinase from Acaryochloris marina (strain MBIC 11017).